The chain runs to 432 residues: Glutamyl-tRNA reductase (432 aa).

Substrate-binding positions include 55–58 (TCNR), Ser-114, 119–121 (ETQ), and Gln-125. Catalysis depends on Cys-56, which acts as the Nucleophile. 194–199 (GAGEMI) provides a ligand contact to NADP(+).

It belongs to the glutamyl-tRNA reductase family. As to quaternary structure, homodimer.

The catalysed reaction is (S)-4-amino-5-oxopentanoate + tRNA(Glu) + NADP(+) = L-glutamyl-tRNA(Glu) + NADPH + H(+). It participates in porphyrin-containing compound metabolism; protoporphyrin-IX biosynthesis; 5-aminolevulinate from L-glutamyl-tRNA(Glu): step 1/2. Catalyzes the NADPH-dependent reduction of glutamyl-tRNA(Glu) to glutamate 1-semialdehyde (GSA). In Burkholderia cenocepacia (strain ATCC BAA-245 / DSM 16553 / LMG 16656 / NCTC 13227 / J2315 / CF5610) (Burkholderia cepacia (strain J2315)), this protein is Glutamyl-tRNA reductase.